The following is an 854-amino-acid chain: Fibroblast growth factor receptor 1 (854 aa).

A signal peptide spans M1–S20. Residues V21–S383 lie on the Extracellular side of the membrane. Positions P29–T120 constitute an Ig-like C2-type 1 domain. A disulfide bridge links C50 with C102. N-linked (GlcNAc...) asparagine glycosylation is found at N95, N99, N110, N118, N140, N175, N202, N248, N283, N317, and N346. Ig-like C2-type domains lie at P147–T259 and P268–I369. C166 and C242 are disulfide-bonded. Cysteines 288 and 353 form a disulfide. A helical membrane pass occupies residues I384–F404. Topologically, residues F405–V854 are cytoplasmic. A Protein kinase domain is found at K551 to I822. Residues L557–V565 and K585 each bind ATP. D689 (proton acceptor) is an active-site residue. At Y718 the chain carries Phosphotyrosine; by autocatalysis.

It belongs to the protein kinase superfamily. Tyr protein kinase family. Fibroblast growth factor receptor subfamily. Expressed in brain, stem cells and the mesenchymal cells.

The protein resides in the membrane. The catalysed reaction is L-tyrosyl-[protein] + ATP = O-phospho-L-tyrosyl-[protein] + ADP + H(+). In terms of biological role, receptor for basic fibroblast growth factor. The sequence is that of Fibroblast growth factor receptor 1 (FGFR1) from Dugesia japonica (Planarian).